Here is a 183-residue protein sequence, read N- to C-terminus: Nodulation protein L (183 aa).

Belongs to the transferase hexapeptide repeat family.

Acetyltransferase implicated in the O-acetylation of Nod factors. This Rhizobium meliloti (strain 1021) (Ensifer meliloti) protein is Nodulation protein L (nodL).